We begin with the raw amino-acid sequence, 77 residues long: Conodipine-M alpha chain (77 aa).

Residue Gln-1 is modified to Pyrrolidone carboxylic acid. Residue His-36 is part of the active site.

As to quaternary structure, heterodimer of an alpha and a beta chains; probably disulfide-linked. Ca(2+) serves as cofactor. In terms of tissue distribution, expressed by the venom duct.

It is found in the secreted. The catalysed reaction is a 1,2-diacyl-sn-glycero-3-phosphocholine + H2O = a 1-acyl-sn-glycero-3-phosphocholine + a fatty acid + H(+). Inhibited by linoleoyl amide and MG14. Functionally, heterodimer: conodipine-M catalyzes the calcium-dependent hydrolysis of the 2-acyl groups in 3-sn-phosphoglycerides. This activity may be supported by the alpha chain. Conodipine-M inhibits the binding of isradipine (a ligand specific for L-type calcium channel) to L-type calcium channels. The chain is Conodipine-M alpha chain from Conus magus (Magical cone).